The chain runs to 299 residues: Ciliary microtubule inner protein 2B (299 aa).

It belongs to the CIMIP2 family. Expressed in airway epithelial cells.

It is found in the cytoplasm. Its subcellular location is the cytoskeleton. The protein resides in the cilium axoneme. Microtubule inner protein (MIP) part of the dynein-decorated doublet microtubules (DMTs) in cilia axoneme, which is required for motile cilia beating. This Danio rerio (Zebrafish) protein is Ciliary microtubule inner protein 2B (cimip2b).